A 719-amino-acid chain; its full sequence is Transcription factor E4F1 (719 aa).

The segment at 20 to 63 (NIITIQTTLGDEDEDIHKCGKCLAEFSALDAFIQHKLSRSCKRT) is required for ubiquitin ligase activity. Positions 59–125 (SCKRTQDPQT…SEDESSSPSK (67 aa)) are disordered. Residues 98–109 (EKQDAKVASGDK) are compositionally biased toward basic and acidic residues. The interval 128 to 207 (WKLNTEGRYV…GLAFRESGAL (80 aa)) is mediates dimerization and DNA-binding. C2H2-type zinc fingers lie at residues 136 to 158 (YVCD…MFTH) and 164 to 186 (FVCE…KRRH). Residues 192–216 (YRCNQCGLAFRESGALTRHLKSLTP) form a C2H2-type 3; degenerate zinc finger. 5 C2H2-type zinc fingers span residues 365 to 387 (YKCP…VKGH), 393 to 415 (FKCL…METH), 421 to 443 (YKCG…MRAH), 449 to 471 (YHCS…HRTH), and 477 to 499 (YVCQ…IRHH). The segment at 505-527 (FKCSKCGRGFAEHGTLNRHLRAK) adopts a C2H2-type 9; degenerate zinc-finger fold.

The protein resides in the nucleus. The protein localises to the nucleoplasm. Its subcellular location is the cytoplasm. It catalyses the reaction S-ubiquitinyl-[E2 ubiquitin-conjugating enzyme]-L-cysteine + [acceptor protein]-L-lysine = [E2 ubiquitin-conjugating enzyme]-L-cysteine + N(6)-ubiquitinyl-[acceptor protein]-L-lysine.. Its pathway is protein modification; protein ubiquitination. Its function is as follows. May function as a transcriptional repressor. May also function as a ubiquitin ligase. Functions in cell survival and proliferation through control of the cell cycle. This is Transcription factor E4F1 (e4f1) from Danio rerio (Zebrafish).